A 144-amino-acid chain; its full sequence is Sec-independent protein translocase protein TatB (144 aa).

Residues 1 to 21 (MFEIGFWELVLVAIIGIVVVG) traverse the membrane as a helical segment. The segment at 97-144 (KMIDEPPYQEPPPAAHSVQTDAEAYRDTGIEPADKSSSPEHHHDDAAR) is disordered. Residues 119–144 (EAYRDTGIEPADKSSSPEHHHDDAAR) show a composition bias toward basic and acidic residues.

Belongs to the TatB family. In terms of assembly, the Tat system comprises two distinct complexes: a TatABC complex, containing multiple copies of TatA, TatB and TatC subunits, and a separate TatA complex, containing only TatA subunits. Substrates initially bind to the TatABC complex, which probably triggers association of the separate TatA complex to form the active translocon.

The protein resides in the cell inner membrane. In terms of biological role, part of the twin-arginine translocation (Tat) system that transports large folded proteins containing a characteristic twin-arginine motif in their signal peptide across membranes. Together with TatC, TatB is part of a receptor directly interacting with Tat signal peptides. TatB may form an oligomeric binding site that transiently accommodates folded Tat precursor proteins before their translocation. The polypeptide is Sec-independent protein translocase protein TatB (Dichelobacter nodosus (strain VCS1703A)).